Consider the following 532-residue polypeptide: Zinc finger protein ZIC 2 (532 aa).

A necessary for interaction with MDFIC and transcriptional activation or repression region spans residues 100–255 (PHAAHVGSYS…YMRQQCIKQE (156 aa)). A phosphoserine mark is found at S191 and S199. K253 participates in a covalent cross-link: Glycyl lysine isopeptide (Lys-Gly) (interchain with G-Cter in SUMO2). The C2H2-type 1; atypical zinc-finger motif lies at 256–291 (LICKWIDPEQLSNPKKSCNKTFSTMHELVTHVSVEH). Residues 300–327 (HVCFWEECPREGKPFKAKYKLVNHIRVH) form a C2H2-type 2; atypical zinc finger. 3 C2H2-type zinc fingers span residues 333–357 (FPCP…KRTH), 363–387 (FQCE…MHVH), and 393–415 (YLCK…MKVH). Disordered stretches follow at residues 406 to 452 (SSLR…SSSN) and 475 to 532 (HRGG…EWYV). Positions 417–435 (SSPQGSESSPAASSGYESS) are enriched in low complexity. A compositionally biased stretch (gly residues) spans 476–521 (RGGGSGSGGAGGGSGGGSGSGGGGGGAGGGGGGSSGGGSGTAGGHS). Positions 523–532 (LSSNFNEWYV) are enriched in polar residues.

Belongs to the GLI C2H2-type zinc-finger protein family. As to quaternary structure, interacts with RNF180. Interacts (via the C2H2-type domains 3, 4 and 5) with MDFIC (via the C2H2-type domains 3, 4 and 5); the interaction reduces its transcriptional activity. Interacts with GLI1 and GLI2. Interacts (via C2H2-type domain 3) with DHX9. Post-translationally, phosphorylated. Ubiquitinated by RNF180, leading to its degradation.

It localises to the nucleus. Its subcellular location is the cytoplasm. Its function is as follows. Acts as a transcriptional activator or repressor. Plays important roles in the early stage of organogenesis of the CNS. Activates the transcription of the serotonin transporter SERT in uncrossed ipsilateral retinal ganglion cells (iRGCs) to refine eye-specific projections in primary visual targets. Its transcriptional activity is repressed by MDFIC. Involved in the formation of the ipsilateral retinal projection at the optic chiasm midline. Drives the expression of EPHB1 on ipsilaterally projecting growth cones. Binds to the minimal GLI-consensus sequence 5'-TGGGTGGTC-3'. Associates to the basal SERT promoter region from ventrotemporal retinal segments of retinal embryos. In Homo sapiens (Human), this protein is Zinc finger protein ZIC 2 (ZIC2).